Reading from the N-terminus, the 150-residue chain is Lipoprotein signal peptidase (150 aa).

Helical transmembrane passes span 58–78 (FFII…FKST) and 85–107 (SFSL…GYVV). Catalysis depends on residues aspartate 108 and aspartate 122. Residues 117–137 (VFNLADFFITGGVLLLTFLIL) form a helical membrane-spanning segment.

It belongs to the peptidase A8 family.

It is found in the cell membrane. It carries out the reaction Release of signal peptides from bacterial membrane prolipoproteins. Hydrolyzes -Xaa-Yaa-Zaa-|-(S,diacylglyceryl)Cys-, in which Xaa is hydrophobic (preferably Leu), and Yaa (Ala or Ser) and Zaa (Gly or Ala) have small, neutral side chains.. The protein operates within protein modification; lipoprotein biosynthesis (signal peptide cleavage). In terms of biological role, this protein specifically catalyzes the removal of signal peptides from prolipoproteins. This Caldicellulosiruptor bescii (strain ATCC BAA-1888 / DSM 6725 / KCTC 15123 / Z-1320) (Anaerocellum thermophilum) protein is Lipoprotein signal peptidase.